The primary structure comprises 802 residues: Oligophrenin-1 (802 aa).

The PH domain occupies 265 to 368; it reads QPTIEGYLYT…WMEAMDGKEP (104 aa). Residues 380-564 enclose the Rho-GAP domain; the sequence is MELNEVGFKF…ILIEHFGKIY (185 aa). 2 disordered regions span residues 606–665 and 681–802; these read SLDE…SEPC and GTKA…GDES. Over residues 617–627 the composition is skewed to polar residues; the sequence is QTPNGTITSNL. Positions 716–732 are enriched in basic and acidic residues; the sequence is HHKEGDTDGFSKVRPPG.

In terms of assembly, interacts with HOMER1. Interacts with AMPA receptor complexes. Interacts with SH3GL2 (endophilin-A1). Interacts (via C-terminus) with NR1D1.

It is found in the postsynapse. It localises to the presynapse. Its subcellular location is the cell projection. The protein resides in the axon. The protein localises to the dendritic spine. It is found in the dendrite. It localises to the cytoplasm. Functionally, stimulates GTP hydrolysis of members of the Rho family. Its action on RHOA activity and signaling is implicated in growth and stabilization of dendritic spines, and therefore in synaptic function. Critical for the stabilization of AMPA receptors at postsynaptic sites. Critical for the regulation of synaptic vesicle endocytosis at presynaptic terminals. Required for the localization of NR1D1 to dendrites, can suppress its repressor activity and protect it from proteasomal degradation. This is Oligophrenin-1 (Ophn1) from Mus musculus (Mouse).